The sequence spans 502 residues: Zinc finger protein 3 homolog (502 aa).

2 stretches are compositionally biased toward basic and acidic residues: residues 1-13 (MGTE…PKEE) and 80-93 (PSSE…ESER). 2 disordered regions span residues 1-26 (MGTE…SLLE) and 47-103 (LEGH…NLVT). Glycyl lysine isopeptide (Lys-Gly) (interchain with G-Cter in SUMO2) cross-links involve residues Lys-6 and Lys-11. 13 consecutive C2H2-type zinc fingers follow at residues 141-163 (HTCK…MRVH), 169-191 (FECK…LRIH), 197-219 (FACN…HRIH), 225-247 (YKCE…QRIH), 253-275 (YECN…QRIH), 281-303 (HECN…QKIH), 309-331 (YLCN…QRIH), 337-359 (YECN…IRIH), 365-387 (YVCK…ERIH), 393-415 (YECF…QRIH), 421-443 (HQCN…QKIH), 449-471 (YECS…QRIH), and 477-499 (YECQ…QSVH).

It belongs to the krueppel C2H2-type zinc-finger protein family.

Its subcellular location is the nucleus. May be involved in transcriptional regulation. The protein is Zinc finger protein 3 homolog (ZFP3) of Homo sapiens (Human).